Here is a 285-residue protein sequence, read N- to C-terminus: Putative alkaline ceramidase dcd3B (285 aa).

3 helical membrane passes run 34–54 (TFSSFIITAFGVYGIFLMMSA), 77–97 (VLFSYLSLAIVGVGSAFYHAT), and 104–124 (LFDEFPMMLTASMFVYCILTI). Residue Asn-131 is glycosylated (N-linked (GlcNAc...) asparagine). A run of 4 helical transmembrane segments spans residues 141-161 (RFLPYILSLYVIVVAITITII), 166-186 (IILQSSFGLLIFSNVFLSYMY), 200-220 (PKKFLYLCIASMGIAYISWLT), and 236-256 (LHAVWHALTGLAGFYYIQFFI).

This sequence belongs to the alkaline ceramidase family.

Its subcellular location is the membrane. The protein is Putative alkaline ceramidase dcd3B (dcd3B) of Dictyostelium discoideum (Social amoeba).